The following is a 150-amino-acid chain: Leukotriene C4 synthase (150 aa).

Topologically, residues 1–6 (MKDEVA) are cytoplasmic. Residues 7–27 (LLASVTLLGVLLQAYFSLQVI) form a helical membrane-spanning segment. The Lumenal segment spans residues 28–48 (SARRAFRVSPPLTTGPPEFER). R30 provides a ligand contact to glutathione. R31 (proton donor) is an active-site residue. A Phosphoserine modification is found at S36. A helical membrane pass occupies residues 49–69 (IYRAQVNCSEYFPLFLAMLWV). Glutathione-binding positions include 51-55 (RAQVN) and 58-59 (EY). The Cytoplasmic portion of the chain corresponds to 70-73 (AGIF). A helical transmembrane segment spans residues 74–94 (FHEGAAALCGLVYLFARLRYF). 93 to 97 (YFQGY) is a binding site for glutathione. Over 95-104 (QGYARSAQQR) the chain is Lumenal. Catalysis depends on R104, which acts as the Proton acceptor. Residues 105-124 (LAPLYASARALWLLVALAAL) form a helical membrane-spanning segment. The Cytoplasmic segment spans residues 125-150 (GLLAHFLPAELRAALLGQLRKLLLRS).

The protein belongs to the MAPEG family. Homotrimer. Interacts with ALOX5AP and ALOX5. Post-translationally, phosphorylation at Ser-36 by RPS6KB1 inhibits the leukotriene-C4 synthase activity.

It localises to the nucleus outer membrane. The protein resides in the endoplasmic reticulum membrane. The protein localises to the nucleus membrane. The enzyme catalyses leukotriene C4 = leukotriene A4 + glutathione. It carries out the reaction (13S,14S)-epoxy-(4Z,7Z,9E,11E,16Z,19Z)-docosahexaenoate + glutathione = (13R)-S-glutathionyl-(14S)-hydroxy-(4Z,7Z,9E,11E,16Z,19Z)-docosahexaenoate. The protein operates within lipid metabolism; leukotriene C4 biosynthesis. With respect to regulation, inhibited by MK886. In terms of biological role, catalyzes the conjugation of leukotriene A4 with reduced glutathione (GSH) to form leukotriene C4 with high specificity. Can also catalyze the transfer of a glutathionyl group from glutathione (GSH) to 13(S),14(S)-epoxy-docosahexaenoic acid to form maresin conjugate in tissue regeneration 1 (MCTR1), a bioactive lipid mediator that possess potent anti-inflammatory and proresolving actions. The sequence is that of Leukotriene C4 synthase (LTC4S) from Bos taurus (Bovine).